A 230-amino-acid chain; its full sequence is 2,3-bisphosphoglycerate-dependent phosphoglycerate mutase (230 aa).

Substrate-binding positions include 8 to 15, 21 to 22, Arg60, 87 to 90, Lys98, 114 to 115, and 183 to 184; these read RHGESEWN, TG, ERHY, RR, and GN. His9 acts as the Tele-phosphohistidine intermediate in catalysis. Residue Glu87 is the Proton donor/acceptor of the active site.

Belongs to the phosphoglycerate mutase family. BPG-dependent PGAM subfamily.

It carries out the reaction (2R)-2-phosphoglycerate = (2R)-3-phosphoglycerate. The protein operates within carbohydrate degradation; glycolysis; pyruvate from D-glyceraldehyde 3-phosphate: step 3/5. Its function is as follows. Catalyzes the interconversion of 2-phosphoglycerate and 3-phosphoglycerate. This chain is 2,3-bisphosphoglycerate-dependent phosphoglycerate mutase, found in Streptococcus mutans serotype c (strain ATCC 700610 / UA159).